A 292-amino-acid chain; its full sequence is 6-phospho-5-dehydro-2-deoxy-D-gluconate aldolase (292 aa).

Asp-85 (proton donor) is an active-site residue. Residues His-86 and His-180 each contribute to the Zn(2+) site. Dihydroxyacetone phosphate is bound at residue Gly-181. Residue His-208 coordinates Zn(2+). Dihydroxyacetone phosphate is bound by residues Gly-209–Ser-211 and Asn-230–Thr-233. Thr-233 is subject to Phosphothreonine.

It belongs to the class II fructose-bisphosphate aldolase family. IolJ subfamily. Zn(2+) is required as a cofactor.

It catalyses the reaction 6-phospho-5-dehydro-2-deoxy-D-gluconate = 3-oxopropanoate + dihydroxyacetone phosphate. It functions in the pathway polyol metabolism; myo-inositol degradation into acetyl-CoA; acetyl-CoA from myo-inositol: step 6/7. Produces dihydroxyacetone phosphate (DHAP or glycerone phosphate) and malonic semialdehyde (MSA or 3-oxopropanoate) from 6-phospho-5-dehydro-2-deoxy-D-gluconate (DKGP). This Bacillus licheniformis (strain ATCC 14580 / DSM 13 / JCM 2505 / CCUG 7422 / NBRC 12200 / NCIMB 9375 / NCTC 10341 / NRRL NRS-1264 / Gibson 46) protein is 6-phospho-5-dehydro-2-deoxy-D-gluconate aldolase (iolJ).